Consider the following 291-residue polypeptide: Polyamine aminopropyltransferase (291 aa).

The region spanning 5–245 (PGPVSLIEPL…YAVNYIIGSL (241 aa)) is the PABS domain. Gln36 provides a ligand contact to S-methyl-5'-thioadenosine. Spermidine contacts are provided by His67 and Glu91. S-methyl-5'-thioadenosine-binding positions include Asp111 and 143–144 (DG). The Proton acceptor role is filled by Asp164.

It belongs to the spermidine/spermine synthase family. In terms of assembly, homodimer or homotetramer.

It localises to the cytoplasm. The catalysed reaction is S-adenosyl 3-(methylsulfanyl)propylamine + putrescine = S-methyl-5'-thioadenosine + spermidine + H(+). It participates in amine and polyamine biosynthesis; spermidine biosynthesis; spermidine from putrescine: step 1/1. Its function is as follows. Catalyzes the irreversible transfer of a propylamine group from the amino donor S-adenosylmethioninamine (decarboxy-AdoMet) to putrescine (1,4-diaminobutane) to yield spermidine. This is Polyamine aminopropyltransferase from Pyrobaculum islandicum (strain DSM 4184 / JCM 9189 / GEO3).